We begin with the raw amino-acid sequence, 400 residues long: 3-phenylpropionate/cinnamic acid dioxygenase ferredoxin--NAD(+) reductase component (400 aa).

5–36 (TIIIVGGGQAAAMAAASLRQQGFTGELHLFSD) contributes to the FAD binding site. Residue 146 to 174 (SVVIVGAGTIGLELAASATQRRCKVTVIE) participates in NAD(+) binding.

Belongs to the bacterial ring-hydroxylating dioxygenase ferredoxin reductase family. This dioxygenase system consists of four proteins: the two subunits of the hydroxylase component (HcaE and HcaF), a ferredoxin (HcaC) and a ferredoxin reductase (HcaD). It depends on FAD as a cofactor.

It carries out the reaction 2 reduced [2Fe-2S]-[ferredoxin] + NAD(+) + H(+) = 2 oxidized [2Fe-2S]-[ferredoxin] + NADH. It functions in the pathway aromatic compound metabolism; 3-phenylpropanoate degradation. In terms of biological role, part of the multicomponent 3-phenylpropionate dioxygenase, that converts 3-phenylpropionic acid (PP) and cinnamic acid (CI) into 3-phenylpropionate-dihydrodiol (PP-dihydrodiol) and cinnamic acid-dihydrodiol (CI-dihydrodiol), respectively. This Shigella sonnei (strain Ss046) protein is 3-phenylpropionate/cinnamic acid dioxygenase ferredoxin--NAD(+) reductase component.